The following is a 655-amino-acid chain: Acetyl-coenzyme A synthetase (655 aa).

CoA contacts are provided by residues 196 to 199 and Thr-316; that span reads RGGK. ATP contacts are provided by residues 392–394, 416–421, Asp-507, and Arg-522; these read GEP and DTWWQT. CoA is bound at residue Ser-530. Arg-533 serves as a coordination point for ATP. Mg(2+) is bound by residues Val-544 and Val-549. Lys-619 carries the post-translational modification N6-acetyllysine.

This sequence belongs to the ATP-dependent AMP-binding enzyme family. Requires Mg(2+) as cofactor. Post-translationally, acetylated. Deacetylation by the SIR2-homolog deacetylase activates the enzyme.

It catalyses the reaction acetate + ATP + CoA = acetyl-CoA + AMP + diphosphate. Catalyzes the conversion of acetate into acetyl-CoA (AcCoA), an essential intermediate at the junction of anabolic and catabolic pathways. AcsA undergoes a two-step reaction. In the first half reaction, AcsA combines acetate with ATP to form acetyl-adenylate (AcAMP) intermediate. In the second half reaction, it can then transfer the acetyl group from AcAMP to the sulfhydryl group of CoA, forming the product AcCoA. The chain is Acetyl-coenzyme A synthetase from Thiobacillus denitrificans (strain ATCC 25259 / T1).